The following is a 450-amino-acid chain: Chromosomal replication initiator protein DnaA (450 aa).

The tract at residues 1–69 is domain I, interacts with DnaA modulators; that stretch reads MHDVWRQATE…VGALSVTAGK (69 aa). Positions 69–113 are domain II; the sequence is KKYFIELVVQEEDQNAEVPQAEDLIIKGHQEIEQPVTSQPETSSS. The domain III, AAA+ region stretch occupies residues 114 to 330; it reads SLNPKYTFEL…GMLIRLGAYS (217 aa). G158, G160, K161, and S162 together coordinate ATP. The segment at 331 to 450 is domain IV, binds dsDNA; that stretch reads SLQGIPITLD…IEDIKLILLK (120 aa).

The protein belongs to the DnaA family. In terms of assembly, oligomerizes as a right-handed, spiral filament on DNA at oriC.

It localises to the cytoplasm. Its function is as follows. Plays an essential role in the initiation and regulation of chromosomal replication. ATP-DnaA binds to the origin of replication (oriC) to initiate formation of the DNA replication initiation complex once per cell cycle. Binds the DnaA box (a 9 base pair repeat at the origin) and separates the double-stranded (ds)DNA. Forms a right-handed helical filament on oriC DNA; dsDNA binds to the exterior of the filament while single-stranded (ss)DNA is stabiized in the filament's interior. The ATP-DnaA-oriC complex binds and stabilizes one strand of the AT-rich DNA unwinding element (DUE), permitting loading of DNA polymerase. After initiation quickly degrades to an ADP-DnaA complex that is not apt for DNA replication. Binds acidic phospholipids. This chain is Chromosomal replication initiator protein DnaA, found in Pelobacter propionicus (strain DSM 2379 / NBRC 103807 / OttBd1).